We begin with the raw amino-acid sequence, 295 residues long: Small ribosomal subunit biogenesis GTPase RsgA (295 aa).

The 161-residue stretch at 68 to 228 (KNLLVKPHVA…VVDTPGFANL (161 aa)) folds into the CP-type G domain. GTP-binding positions include 117–120 (NKMD) and 170–178 (GLSGVGKSS). Zn(2+) is bound by residues cysteine 250, cysteine 255, histidine 257, and cysteine 263.

This sequence belongs to the TRAFAC class YlqF/YawG GTPase family. RsgA subfamily. Monomer. Associates with 30S ribosomal subunit, binds 16S rRNA. It depends on Zn(2+) as a cofactor.

It is found in the cytoplasm. One of several proteins that assist in the late maturation steps of the functional core of the 30S ribosomal subunit. Helps release RbfA from mature subunits. May play a role in the assembly of ribosomal proteins into the subunit. Circularly permuted GTPase that catalyzes slow GTP hydrolysis, GTPase activity is stimulated by the 30S ribosomal subunit. This is Small ribosomal subunit biogenesis GTPase RsgA from Thermotoga neapolitana (strain ATCC 49049 / DSM 4359 / NBRC 107923 / NS-E).